The sequence spans 1066 residues: DNA-directed RNA polymerase subunit beta (1066 aa).

Belongs to the RNA polymerase beta chain family. As to quaternary structure, in plastids the minimal PEP RNA polymerase catalytic core is composed of four subunits: alpha, beta, beta', and beta''. When a (nuclear-encoded) sigma factor is associated with the core the holoenzyme is formed, which can initiate transcription.

It is found in the plastid. It localises to the chloroplast. It catalyses the reaction RNA(n) + a ribonucleoside 5'-triphosphate = RNA(n+1) + diphosphate. Its function is as follows. DNA-dependent RNA polymerase catalyzes the transcription of DNA into RNA using the four ribonucleoside triphosphates as substrates. The protein is DNA-directed RNA polymerase subunit beta of Psilotum nudum (Whisk fern).